Consider the following 129-residue polypeptide: Large ribosomal subunit protein mL53 (129 aa).

The transit peptide at 1-50 directs the protein to the mitochondrion; that stretch reads MREKLNLLAKLKSVVYKFDPLNPNTRSIRSFIPLTTCKRSRQLAPECSIS.

Belongs to the mitochondrion-specific ribosomal protein mL53 family.

It localises to the mitochondrion. The chain is Large ribosomal subunit protein mL53 (mrpl53) from Dictyostelium discoideum (Social amoeba).